A 292-amino-acid chain; its full sequence is Norajmaline N-methyltransferase (292 aa).

The interval 71–80 is SAM motif I; it reads KNMLDIGCGV. Positions 134–142 are SAM motif II; it reads KDGTFDLVL. The Vacuolar targeting signal signature appears at 135 to 141; it reads DGTFDLV. The SAM motif III stretch occupies residues 161 to 170; the sequence is IRVAAPGAPI.

This sequence belongs to the class I-like SAM-binding methyltransferase superfamily. gTMT family. As to quaternary structure, homodimer. As to expression, mainly expressed in mature roots and, to a lesser extent, in leaves, stems and flowers.

It is found in the vacuole membrane. It carries out the reaction norajmaline + S-adenosyl-L-methionine = ajmaline + S-adenosyl-L-homocysteine + H(+). The enzyme catalyses 4-methylnorajmaline + S-adenosyl-L-methionine = 4-methylajmaline + S-adenosyl-L-homocysteine + H(+). The protein operates within alkaloid biosynthesis; ajmaline biosynthesis. In terms of biological role, N-methyltransferase involved in the biosynthesis of ajmaline-type monoterpenoid indole alkaloids (MIAs) natural products, important plant-derived pharmaceuticals used in the therapy of heart disorders. Catalyzes the indole N-methylation of norajmaline to produce ajmaline. Also able, with a lower efficiency, to mediates the conversion of 4-methylnorajmaline to 4-methylajmaline. This Rauvolfia serpentina (Serpentine wood) protein is Norajmaline N-methyltransferase.